A 558-amino-acid polypeptide reads, in one-letter code: Potassium-transporting ATPase potassium-binding subunit (558 aa).

Helical transmembrane passes span 1–21, 60–80, 129–149, 169–189, 246–266, 281–301, 326–346, 353–373, 376–396, 415–435, 485–505, and 523–543; these read MSIV…SRYL, IKHF…LLLI, VITF…IAML, FIVR…ISQG, WSNY…VFLF, IMIF…CLYF, FGIG…TGTV, LTPL…VFGG, VGLM…SLMI, IALS…LAFI, IVML…VSSL, and LFFS…TFLP.

Belongs to the KdpA family. The system is composed of three essential subunits: KdpA, KdpB and KdpC.

Its subcellular location is the cell membrane. Its function is as follows. Part of the high-affinity ATP-driven potassium transport (or Kdp) system, which catalyzes the hydrolysis of ATP coupled with the electrogenic transport of potassium into the cytoplasm. This subunit binds the extracellular potassium ions and delivers the ions to the membrane domain of KdpB through an intramembrane tunnel. The protein is Potassium-transporting ATPase potassium-binding subunit of Staphylococcus haemolyticus (strain JCSC1435).